The following is a 97-amino-acid chain: Putative septation protein SpoVG (97 aa).

Belongs to the SpoVG family.

In terms of biological role, essential for sporulation. Interferes with or is a negative regulator of the pathway leading to asymmetric septation. In Bacillus cytotoxicus (strain DSM 22905 / CIP 110041 / 391-98 / NVH 391-98), this protein is Putative septation protein SpoVG.